The following is a 545-amino-acid chain: Beta-sesquiphellandrene synthase (545 aa).

Mg(2+)-binding residues include Asp-299, Asp-303, Asn-443, Ser-447, and Glu-451. Positions 299 to 303 match the DDXXD motif motif; that stretch reads DDIMD.

Belongs to the terpene synthase family. It depends on Mg(2+) as a cofactor. Mn(2+) is required as a cofactor.

The protein resides in the cytoplasm. It catalyses the reaction (2E,6E)-farnesyl diphosphate = beta-sesquiphellandrene + diphosphate. The protein operates within secondary metabolite biosynthesis; terpenoid biosynthesis. Its function is as follows. Sesquiterpene synthase converting farnesyl diphosphate into beta-sesquiphellandrene and six minor products, zingiberene, 7-epi-sesquithujene, sesquisabinene A, (E)-alpha-bergamotene, (E)-beta-farnesene and beta-bisabolene. Can also accept geranyl diphosphate as substrate, producing nine monoterpenes, with myrcene and limonene as the major products. The sequence is that of Beta-sesquiphellandrene synthase (TPS2) from Sorghum bicolor (Sorghum).